A 240-amino-acid polypeptide reads, in one-letter code: tRNA (guanine-N(1)-)-methyltransferase (240 aa).

S-adenosyl-L-methionine is bound by residues G110 and 129-134 (LGDFVL).

The protein belongs to the RNA methyltransferase TrmD family. As to quaternary structure, homodimer.

It is found in the cytoplasm. The catalysed reaction is guanosine(37) in tRNA + S-adenosyl-L-methionine = N(1)-methylguanosine(37) in tRNA + S-adenosyl-L-homocysteine + H(+). In terms of biological role, specifically methylates guanosine-37 in various tRNAs. The sequence is that of tRNA (guanine-N(1)-)-methyltransferase from Clostridium botulinum (strain ATCC 19397 / Type A).